The sequence spans 464 residues: Phosphoenolpyruvate carboxylase (464 aa).

This sequence belongs to the PEPCase type 2 family. In terms of assembly, homotetramer. Requires Mg(2+) as cofactor.

It catalyses the reaction oxaloacetate + phosphate = phosphoenolpyruvate + hydrogencarbonate. Its function is as follows. Catalyzes the irreversible beta-carboxylation of phosphoenolpyruvate (PEP) to form oxaloacetate (OAA), a four-carbon dicarboxylic acid source for the tricarboxylic acid cycle. This is Phosphoenolpyruvate carboxylase from Thermofilum pendens (strain DSM 2475 / Hrk 5).